Consider the following 156-residue polypeptide: Ribosomal RNA large subunit methyltransferase H (156 aa).

Residues Leu73, Gly104, and 123 to 128 each bind S-adenosyl-L-methionine; that span reads IGPLTL.

Belongs to the RNA methyltransferase RlmH family. As to quaternary structure, homodimer.

The protein localises to the cytoplasm. It catalyses the reaction pseudouridine(1915) in 23S rRNA + S-adenosyl-L-methionine = N(3)-methylpseudouridine(1915) in 23S rRNA + S-adenosyl-L-homocysteine + H(+). Functionally, specifically methylates the pseudouridine at position 1915 (m3Psi1915) in 23S rRNA. The chain is Ribosomal RNA large subunit methyltransferase H from Xanthomonas oryzae pv. oryzae (strain MAFF 311018).